The following is a 20-amino-acid chain: Cytolysin tenebrosin-A (20 aa).

Positions 3–12 are plays an important role in the hemolytic activity; that stretch reads AVAGAVIEGA. The interval 11–20 is N-terminal region; sequence GATLTFEVLQ.

Belongs to the actinoporin family. Sea anemone subfamily. As to quaternary structure, octamer or nonamer in membranes. Monomer in the soluble state.

It localises to the secreted. The protein resides in the nematocyst. It is found in the target cell membrane. Functionally, pore-forming protein that forms cations-selective hydrophilic pores of around 1 nm and causes cardiac stimulation and cytolysis. Pore formation is a multi-step process that involves specific recognition of membrane sphingomyelin (but neither cholesterol nor phosphatidylcholine) using aromatic rich region and adjacent phosphocholine (POC) binding site, firm binding to the membrane (mainly driven by hydrophobic interactions) accompanied by the transfer of the N-terminal region to the lipid-water interface and finally pore formation after oligomerization of monomers. This Actinia tenebrosa (Australian red waratah sea anemone) protein is Cytolysin tenebrosin-A.